The following is a 279-amino-acid chain: DNA repair protein RecO (279 aa).

The protein belongs to the RecO family.

Involved in DNA repair and RecF pathway recombination. The polypeptide is DNA repair protein RecO (Thermosynechococcus vestitus (strain NIES-2133 / IAM M-273 / BP-1)).